Here is a 150-residue protein sequence, read N- to C-terminus: MAEANLDPVFQIQRVYLKDVSLEQPNSPEILLNQEQPGVDIQLGVDAKPVADGMFEVTVTATVHTKIADKTVFLVEAKQAGIFEIRNMQTDQLGAILGIACPQIVYPYLRSNVADVIQRGGFPPVHMAEINFQAMYEQQQAEAATPQIIV.

The protein belongs to the SecB family. As to quaternary structure, homotetramer, a dimer of dimers. One homotetramer interacts with 1 SecA dimer.

The protein resides in the cytoplasm. Its function is as follows. One of the proteins required for the normal export of preproteins out of the cell cytoplasm. It is a molecular chaperone that binds to a subset of precursor proteins, maintaining them in a translocation-competent state. It also specifically binds to its receptor SecA. This is Protein-export protein SecB from Polaromonas sp. (strain JS666 / ATCC BAA-500).